The chain runs to 239 residues: MWNQKHDLESAQTPLYPMMSESPELRWSFIRKVYSIISIQLLVTIAVAATVVKVHSISVFFTTTTAGFALYILLILTPLIVMCPLYYYHQKHPVNYLLLGIFTVALAFAVGLTCAFTSGKVILESVILTAVVVISLTLYTFWAAKRGHDFNFLGPFLFGAVIVLMVFSFIQILFPLGKISVMIYGCLASIIFCGYIVYDTDNLIKRHSYDEYIWAAVSLYLDVINLFLSLLTLLRAVDS.

Transmembrane regions (helical) follow at residues L41–F61, A66–Y86, Y96–F116, V121–F141, F156–L176, I179–D199, and I213–L233.

This sequence belongs to the BI1 family. In terms of tissue distribution, expressed in seedlings, roots, leaves, inflorescences and flowers.

It localises to the membrane. Functionally, regulates the brassinosteroid (BR) signaling pathway that mediates cell elongation and organ morphogenesis. (Microbial infection) Facilitates the development of the powdery mildew fungus E.cruciferarum. In terms of biological role, (Microbial infection) May prevent cell death upon A.alternata f.sp. lycopersici (AAL) toxin treatment. This is Protein LIFEGUARD 2 from Arabidopsis thaliana (Mouse-ear cress).